The following is a 1063-amino-acid chain: Structural polyprotein (1063 aa).

The segment at Met1–Ala131 is disordered. Residues Gly30–Gly69 form a human C1QBP/SF2P32-binding region. The residue at position 46 (Ser46) is a Phosphoserine; by host. Basic and acidic residues predominate over residues Gln70 to Ser87. The segment covering Ala93–Pro107 has biased composition (pro residues). An intrachain disulfide couples Cys153 to Cys197. A functions as E2 signal peptide region spans residues Gly279–Ala300. Over Gly301–Ser534 the chain is Extracellular. 4 N-linked (GlcNAc...) asparagine; by host glycosylation sites follow: Asn353, Asn371, Asn410, and Asn429. Residues Leu535 to Cys555 traverse the membrane as a helical segment. Residues Arg556–Gly582 are Cytoplasmic-facing. Residues Gly563–Gly582 are functions as E1 signal peptide. Residues Glu583–His1028 are Extracellular-facing. Cystine bridges form between Cys590/Cys595, Cys619/Cys824, Cys641/Cys653, Cys699/Cys712, Cys758/Cys767, Cys807/Cys817, Cys931/Cys934, and Cys950/Cys983. Asn658 carries an N-linked (GlcNAc...) asparagine; by host glycan. Ca(2+) contacts are provided by Asn670 and Ala671. Ca(2+) is bound by residues Asp718 and Thr719. Residues Asn759 and Asn791 are each glycosylated (N-linked (GlcNAc...) asparagine; by host). O-linked (GalNAc...) threonine; by host glycosylation is found at Thr1011 and Thr1012. Residues Trp1029–Cys1049 traverse the membrane as a helical segment. At Ala1050–Arg1063 the chain is on the extracellular side.

As to quaternary structure, homodimer; further assembles into homooligomer. Interacts with human C1QBP. Interacts (via N-terminus) with protease/methyltransferase p150. Heterodimer with spike glycoprotein E2. In terms of assembly, heterodimer with spike glycoprotein E1. Structural polyprotein: Specific enzymatic cleavages in vivo yield mature proteins. Two signal peptidase-mediated cleavages within the polyprotein produce the structural proteins capsid, E2, and E1. The E2 signal peptide remains attached to the C-terminus of the capsid protein after cleavage by the signal peptidase. Another signal peptide at E2 C-terminus directs E1 to the ER, with a similar mechanism. In terms of processing, contains three N-linked oligosaccharides. Post-translationally, capsid is phosphorylated on Ser-46 by host. This phosphorylation negatively regulates capsid protein RNA-binding activity. Dephosphorylated by human PP1A.

The protein localises to the virion. It localises to the host cytoplasm. Its subcellular location is the host mitochondrion. The protein resides in the virion membrane. It is found in the host Golgi apparatus membrane. Its function is as follows. Capsid protein interacts with genomic RNA and assembles into icosahedric core particles 65-70 nm in diameter. The resulting nucleocapsid eventually associates with the cytoplasmic domain of E2 at the cell membrane, leading to budding and formation of mature virions from host Golgi membranes. Phosphorylation negatively regulates RNA-binding activity, possibly delaying virion assembly during the viral replication phase. Capsid protein dimerizes and becomes disulfide-linked in the virion. Modulates genomic RNA replication. Modulates subgenomic RNA synthesis by interacting with human C1QBP/SF2P32. Induces both perinuclear clustering of mitochondria and the formation of electron-dense intermitochondrial plaques, both hallmarks of rubella virus infected cells. Induces apoptosis when expressed in transfected cells. Functionally, responsible for viral attachment to target host cell, by binding to the cell receptor. Its transport to the plasma membrane depends on interaction with E1 protein. The surface glycoproteins display an irregular helical organization and a pseudo-tetrameric inner nucleocapsid arrangement. Class II viral fusion protein. Fusion activity is inactive as long as E1 is bound to E2 in mature virion. After virus attachment to target cell and clathrin-mediated endocytosis, acidification of the endosome would induce dissociation of E1/E2 heterodimer and concomitant trimerization of the E1 subunits. This E1 homotrimer is fusion active, and promotes release of viral nucleocapsid in cytoplasm after endosome and viral membrane fusion. The cytoplasmic tail of spike glycoprotein E1 modulates virus release. The surface glycoproteins display an irregular helical organization and a pseudo-tetrameric inner nucleocapsid arrangement. This is Structural polyprotein from Homo sapiens (Human).